Reading from the N-terminus, the 1218-residue chain is DNA-directed RNA polymerase subunit beta' (1218 aa).

Zn(2+)-binding residues include Cys-60, Cys-62, Cys-75, and Cys-78. Mg(2+)-binding residues include Asp-455, Asp-457, and Asp-459. Zn(2+) contacts are provided by Cys-824, Cys-897, Cys-904, and Cys-907. A disordered region spans residues 1195–1218; it reads ENEAQSDKSQDEQEIGEITVDMGE.

The protein belongs to the RNA polymerase beta' chain family. The RNAP catalytic core consists of 2 alpha, 1 beta, 1 beta' and 1 omega subunit. When a sigma factor is associated with the core the holoenzyme is formed, which can initiate transcription. The cofactor is Mg(2+). Zn(2+) is required as a cofactor.

The catalysed reaction is RNA(n) + a ribonucleoside 5'-triphosphate = RNA(n+1) + diphosphate. Its function is as follows. DNA-dependent RNA polymerase catalyzes the transcription of DNA into RNA using the four ribonucleoside triphosphates as substrates. The sequence is that of DNA-directed RNA polymerase subunit beta' from Natranaerobius thermophilus (strain ATCC BAA-1301 / DSM 18059 / JW/NM-WN-LF).